The primary structure comprises 184 residues: UPF0301 protein Rsph17029_2659 (184 aa).

This sequence belongs to the UPF0301 (AlgH) family.

This is UPF0301 protein Rsph17029_2659 from Cereibacter sphaeroides (strain ATCC 17029 / ATH 2.4.9) (Rhodobacter sphaeroides).